The following is a 1124-amino-acid chain: Regulator of nonsense transcripts 1 (1124 aa).

Positions 1-410 (MSVEAYGPSS…LRSSVGAPVE (410 aa)) are sufficient for interaction with RENT2. Ser-10 and Ser-31 each carry phosphoserine. Residues 39-69 (TLPSQTQTPPGGPGGAGGPGGAGAGGAAGQL) are disordered. Positions 51-66 (PGGAGGPGGAGAGGAA) are enriched in gly residues. Residues 110-267 (TKDLPVHACS…NKLEELWKEN (158 aa)) form the Upf1 CH-rich domain. 12 residues coordinate Zn(2+): Cys-118, Cys-121, Cys-132, Ser-135, Cys-140, His-150, His-154, Cys-160, Cys-178, Cys-181, Cys-204, and Cys-208. A C3H region spans residues 118 to 150 (CSYCGIHDPACVVYCNTSKKWFCNGRGNTSGSH). Residues 132–160 (CNTSKKWFCNGRGNTSGSHIVNHLVRAKC) form a CC/SHH/C region. Residues 178 to 208 (CYNCGCRNVFLLGFIPAKADSVVVLLCRQPC) form a C4 region. Residues Gln-481 and 501–505 (GTGKT) contribute to the ATP site. Phosphoserine is present on Ser-560. Gln-671, Tyr-708, and Glu-839 together coordinate ATP. Phosphoserine is present on Ser-951. Disordered regions lie at residues 1004–1053 (FGQA…VASQ) and 1066–1091 (SMSQ…YLGD). Omega-N-methylarginine is present on Arg-1014. Over residues 1020 to 1029 (KTGRGGRQKN) the composition is skewed to basic residues. Polar residues predominate over residues 1036-1053 (PSQTTLPNSQASQDVASQ). Low complexity predominate over residues 1066 to 1081 (SMSQPSQMSQPGLSQP). A phosphoserine mark is found at Ser-1084, Ser-1102, Ser-1105, and Ser-1122. 2 short sequence motifs ([ST]-Q motif) span residues 1084-1085 (SQ) and 1102-1103 (SQ). Residues 1105–1124 (STYQGERAYQHGGVTGLSQY) are disordered.

This sequence belongs to the DNA2/NAM7 helicase family. In terms of assembly, found in a post-splicing messenger ribonucleoprotein (mRNP) complex. Associates with the exon junction complex (EJC). Associates with the SGM1C complex; is phosphorylated by the complex kinase component SGM1. Part of a complex composed of SMG1, DHX34 and UPF1; within the complex DHX34 acts as a scaffolding protein to facilitate SMG1 phosphorylation of UPF1. Interacts with UPF2. Interacts with UPF3A and UPF3B. Interacts with EST1A. Interacts with SLBP. Interacts (when hyperphosphorylated) with PNRC2. Interacts with AGO1 and AGO2. Interacts with GSPT2. Interacts with isoform 1 and isoform 5 of ADAR/ADAR1. Interacts with SMG7. Interacts with ZC3H12A; this interaction occurs in a mRNA translationally active- and termination-dependent manner and is essential for ZC3H12A-mediated degradation of target mRNAs. Interacts with CPSF6. Interacts with MOV10; the interaction is direct and RNA-dependent. Interacts with SHFL; the interaction increases in the presence of RNA. Interacts with UPF2 and DDX4; interactions are mediated by TDRD6. Interacts with DHX34 and PABPC1/PABP1; the interactions are RNA-independent. Interacts with RBM46. Post-translationally, phosphorylated by SMG1; required for formation of mRNA surveillance complexes. As to expression, localizes in male germ cells.

It is found in the cytoplasm. The protein resides in the P-body. It localises to the nucleus. The protein localises to the perinuclear region. It carries out the reaction ATP + H2O = ADP + phosphate + H(+). Its function is as follows. RNA-dependent helicase required for nonsense-mediated decay (NMD) of aberrant mRNAs containing premature stop codons and modulates the expression level of normal mRNAs. Is recruited to mRNAs upon translation termination and undergoes a cycle of phosphorylation and dephosphorylation; its phosphorylation appears to be a key step in NMD. Recruited by release factors to stalled ribosomes together with the SMG1C protein kinase complex to form the transient SURF (SMG1-UPF1-eRF1-eRF3) complex. In EJC-dependent NMD, the SURF complex associates with the exon junction complex (EJC) (located 50-55 or more nucleotides downstream from the termination codon) through UPF2 and allows the formation of an UPF1-UPF2-UPF3 surveillance complex which is believed to activate NMD. Phosphorylated UPF1 is recognized by EST1B/SMG5, SMG6 and SMG7 which are thought to provide a link to the mRNA degradation machinery involving exonucleolytic and endonucleolytic pathways, and to serve as adapters to protein phosphatase 2A (PP2A), thereby triggering UPF1 dephosphorylation and allowing the recycling of NMD factors. UPF1 can also activate NMD without UPF2 or UPF3, and in the absence of the NMD-enhancing downstream EJC indicative for alternative NMD pathways. Plays a role in replication-dependent histone mRNA degradation at the end of phase S; the function is independent of UPF2. For the recognition of premature termination codons (PTC) and initiation of NMD a competitive interaction between UPF1 and PABPC1 with the ribosome-bound release factors is proposed. The ATPase activity of UPF1 is required for disassembly of mRNPs undergoing NMD. Together with UPF2 and dependent on TDRD6, mediates the degradation of mRNA harboring long 3'UTR by inducing the NMD machinery. Also capable of unwinding double-stranded DNA and translocating on single-stranded DNA. In Mus musculus (Mouse), this protein is Regulator of nonsense transcripts 1.